Here is a 563-residue protein sequence, read N- to C-terminus: CTP synthase (563 aa).

The amidoligase domain stretch occupies residues 1–278 (MAKATAKNSA…DLRVLEQLHL (278 aa)). CTP is bound at residue Ser-24. Ser-24 is a binding site for UTP. 25-30 (SLGKGI) lines the ATP pocket. L-glutamine is bound at residue Tyr-65. Position 82 (Asp-82) interacts with ATP. 2 residues coordinate Mg(2+): Asp-82 and Glu-151. CTP-binding positions include 158–160 (DIE), 198–203 (KTKPSQ), and Lys-234. UTP contacts are provided by residues 198–203 (KTKPSQ) and Lys-234. 250–252 (KDV) contacts ATP. Residues 303-545 (TIALVGKYIA…VKAALEQKKA (243 aa)) enclose the Glutamine amidotransferase type-1 domain. Gly-363 is an L-glutamine binding site. The active-site Nucleophile; for glutamine hydrolysis is the Cys-390. L-glutamine contacts are provided by residues 391–394 (LGMQ), Glu-414, and Arg-471. Catalysis depends on residues His-518 and Glu-520. Residues 542–563 (QKKANGKKPTAPSEKTKKTKTK) form a disordered region.

It belongs to the CTP synthase family. As to quaternary structure, homotetramer.

The enzyme catalyses UTP + L-glutamine + ATP + H2O = CTP + L-glutamate + ADP + phosphate + 2 H(+). It catalyses the reaction L-glutamine + H2O = L-glutamate + NH4(+). The catalysed reaction is UTP + NH4(+) + ATP = CTP + ADP + phosphate + 2 H(+). It participates in pyrimidine metabolism; CTP biosynthesis via de novo pathway; CTP from UDP: step 2/2. Allosterically activated by GTP, when glutamine is the substrate; GTP has no effect on the reaction when ammonia is the substrate. The allosteric effector GTP functions by stabilizing the protein conformation that binds the tetrahedral intermediate(s) formed during glutamine hydrolysis. Inhibited by the product CTP, via allosteric rather than competitive inhibition. Its function is as follows. Catalyzes the ATP-dependent amination of UTP to CTP with either L-glutamine or ammonia as the source of nitrogen. Regulates intracellular CTP levels through interactions with the four ribonucleotide triphosphates. In Fibrobacter succinogenes (strain ATCC 19169 / S85), this protein is CTP synthase.